The sequence spans 611 residues: Urease subunit alpha 2 (611 aa).

Residues 154–611 (GGIDSHIHFI…LPMAQRYFLF (458 aa)) form the Urease domain. Positions 159, 161, and 242 each coordinate Ni(2+). The residue at position 242 (Lys242) is an N6-carboxylysine. Substrate is bound at residue His244. His271 and His297 together coordinate Ni(2+). His345 serves as the catalytic Proton donor. Asp385 serves as a coordination point for Ni(2+). The disordered stretch occupies residues 411–434 (GHLAPDQSAKTEQSLDNIMLSPTD). The span at 418–434 (SAKTEQSLDNIMLSPTD) shows a compositional bias: polar residues.

The protein belongs to the metallo-dependent hydrolases superfamily. Urease alpha subunit family. Heterotrimer of UreA (gamma), UreB (beta) and UreC (alpha) subunits. Three heterotrimers associate to form the active enzyme. The cofactor is Ni cation. Post-translationally, carboxylation allows a single lysine to coordinate two nickel ions.

Its subcellular location is the cytoplasm. It catalyses the reaction urea + 2 H2O + H(+) = hydrogencarbonate + 2 NH4(+). The protein operates within nitrogen metabolism; urea degradation; CO(2) and NH(3) from urea (urease route): step 1/1. The protein is Urease subunit alpha 2 of Psychrobacter cryohalolentis (strain ATCC BAA-1226 / DSM 17306 / VKM B-2378 / K5).